A 316-amino-acid polypeptide reads, in one-letter code: Adenine deaminase (316 aa).

3 residues coordinate Zn(2+): His14, His16, and His194. Glu197 acts as the Proton donor in catalysis. Residue Asp275 coordinates Zn(2+). Asp276 contacts substrate.

Belongs to the metallo-dependent hydrolases superfamily. Adenosine and AMP deaminases family. Adenine deaminase type 2 subfamily. It depends on Zn(2+) as a cofactor.

It catalyses the reaction adenine + H2O + H(+) = hypoxanthine + NH4(+). Its function is as follows. Catalyzes the hydrolytic deamination of adenine to hypoxanthine. Plays an important role in the purine salvage pathway and in nitrogen catabolism. In Bordetella avium (strain 197N), this protein is Adenine deaminase.